The primary structure comprises 168 residues: HTH-type transcriptional regulator IscR (168 aa).

Residues 2–131 form the HTH rrf2-type domain; sequence KLTSKGRYAV…NNITLGELMK (130 aa). Positions 28–51 form a DNA-binding region, H-T-H motif; that stretch reads LADISERQGISLSYLEQLFSKLRK. [2Fe-2S] cluster is bound by residues Cys-92, Cys-98, and Cys-104.

[2Fe-2S] cluster is required as a cofactor.

Its function is as follows. Regulates the transcription of several operons and genes involved in the biogenesis of Fe-S clusters and Fe-S-containing proteins. This is HTH-type transcriptional regulator IscR from Vibrio campbellii (strain ATCC BAA-1116).